Consider the following 64-residue polypeptide: Large ribosomal subunit protein uL29 (64 aa).

The protein belongs to the universal ribosomal protein uL29 family.

This is Large ribosomal subunit protein uL29 from Ralstonia pickettii (strain 12J).